Here is an 836-residue protein sequence, read N- to C-terminus: Ethylene receptor 3 (836 aa).

Helical transmembrane passes span 137-157 (LIAA…AGLR), 166-186 (LVQF…TAFT), and 204-224 (LTAL…PQLL). Cu cation-binding residues include Cys176 and His180. The GAF domain occupies 269–413 (DRHTVLYTTL…VVAGQVAVAL (145 aa)). The stretch at 416 to 452 (ATLLEESRAMRDRLAEQNRELLQARRDALMANEARQA) forms a coiled coil. Residues 457-691 (MSQGMRRPIH…LVLRFQLQSP (235 aa)) form the Histidine kinase domain. One can recognise a Response regulatory domain in the interval 718 to 834 (LLIDDDDDIN…LKDELARILQ (117 aa)).

It belongs to the ethylene receptor family. Requires Cu cation as cofactor.

It localises to the endoplasmic reticulum membrane. It catalyses the reaction ATP + protein L-histidine = ADP + protein N-phospho-L-histidine.. Ethylene receptor related to bacterial two-component regulators. Acts as a negative regulator of ethylene signaling. May delay the transition from the vegetative stage to the floral stage by up-regulating GI (GIGANTEA) and RCN1 and cause starch accumulation in stems by down-regulating the alpha-amylase AMY3D. The chain is Ethylene receptor 3 (ETR3) from Oryza sativa subsp. japonica (Rice).